Consider the following 382-residue polypeptide: Mannitol-1-phosphate 5-dehydrogenase (382 aa).

3-14 (ALHFGAGNIGRG) contributes to the NAD(+) binding site.

The protein belongs to the mannitol dehydrogenase family.

It carries out the reaction D-mannitol 1-phosphate + NAD(+) = beta-D-fructose 6-phosphate + NADH + H(+). This Salmonella typhi protein is Mannitol-1-phosphate 5-dehydrogenase.